The primary structure comprises 185 residues: Ribosome-recycling factor (185 aa).

This sequence belongs to the RRF family.

The protein resides in the cytoplasm. In terms of biological role, responsible for the release of ribosomes from messenger RNA at the termination of protein biosynthesis. May increase the efficiency of translation by recycling ribosomes from one round of translation to another. The chain is Ribosome-recycling factor from Frankia casuarinae (strain DSM 45818 / CECT 9043 / HFP020203 / CcI3).